The chain runs to 215 residues: Cytochrome b6 (215 aa).

The helical transmembrane segment at 32 to 52 (IFYCLGGITLTCFLVQVATGF) threads the bilayer. C35 contacts heme c. Positions 86 and 100 each coordinate heme b. A run of 3 helical transmembrane segments spans residues 90 to 110 (ASMMVLMMILHVFRVYLTGGF), 116 to 136 (LTWVTGVVLAVLTASFGVTGY), and 186 to 206 (LHTFVLPLVSAVFMLIHFLMI). H187 and H202 together coordinate heme b.

Belongs to the cytochrome b family. PetB subfamily. In terms of assembly, the 4 large subunits of the cytochrome b6-f complex are cytochrome b6, subunit IV (17 kDa polypeptide, PetD), cytochrome f and the Rieske protein, while the 4 small subunits are PetG, PetL, PetM and PetN. The complex functions as a dimer. It depends on heme b as a cofactor. The cofactor is heme c.

It localises to the plastid. It is found in the chloroplast thylakoid membrane. Its function is as follows. Component of the cytochrome b6-f complex, which mediates electron transfer between photosystem II (PSII) and photosystem I (PSI), cyclic electron flow around PSI, and state transitions. The polypeptide is Cytochrome b6 (Pelargonium hortorum (Common geranium)).